The sequence spans 180 residues: ATP-dependent protease subunit HslV (180 aa).

Thr7 is an active-site residue. Residues Ala162, Cys165, and Thr168 each contribute to the Na(+) site.

This sequence belongs to the peptidase T1B family. HslV subfamily. As to quaternary structure, a double ring-shaped homohexamer of HslV is capped on each side by a ring-shaped HslU homohexamer. The assembly of the HslU/HslV complex is dependent on binding of ATP.

The protein resides in the cytoplasm. The catalysed reaction is ATP-dependent cleavage of peptide bonds with broad specificity.. Its activity is regulated as follows. Allosterically activated by HslU binding. Protease subunit of a proteasome-like degradation complex believed to be a general protein degrading machinery. This Dichelobacter nodosus (strain VCS1703A) protein is ATP-dependent protease subunit HslV.